A 520-amino-acid chain; its full sequence is Probable glycine dehydrogenase (decarboxylating) subunit 2 (520 aa).

The tract at residues 1–29 is disordered; the sequence is MWRQSRWNEPLITEMSRRGRRGALPPRPD. K279 carries the N6-(pyridoxal phosphate)lysine modification.

Belongs to the GcvP family. C-terminal subunit subfamily. The glycine cleavage system is composed of four proteins: P, T, L and H. In this organism, the P 'protein' is a heterodimer of two subunits. Pyridoxal 5'-phosphate is required as a cofactor.

It catalyses the reaction N(6)-[(R)-lipoyl]-L-lysyl-[glycine-cleavage complex H protein] + glycine + H(+) = N(6)-[(R)-S(8)-aminomethyldihydrolipoyl]-L-lysyl-[glycine-cleavage complex H protein] + CO2. The glycine cleavage system catalyzes the degradation of glycine. The P protein binds the alpha-amino group of glycine through its pyridoxal phosphate cofactor; CO(2) is released and the remaining methylamine moiety is then transferred to the lipoamide cofactor of the H protein. This Aeropyrum pernix (strain ATCC 700893 / DSM 11879 / JCM 9820 / NBRC 100138 / K1) protein is Probable glycine dehydrogenase (decarboxylating) subunit 2.